The sequence spans 417 residues: Gamma-glutamyl phosphate reductase (417 aa).

This sequence belongs to the gamma-glutamyl phosphate reductase family.

Its subcellular location is the cytoplasm. It catalyses the reaction L-glutamate 5-semialdehyde + phosphate + NADP(+) = L-glutamyl 5-phosphate + NADPH + H(+). It participates in amino-acid biosynthesis; L-proline biosynthesis; L-glutamate 5-semialdehyde from L-glutamate: step 2/2. In terms of biological role, catalyzes the NADPH-dependent reduction of L-glutamate 5-phosphate into L-glutamate 5-semialdehyde and phosphate. The product spontaneously undergoes cyclization to form 1-pyrroline-5-carboxylate. This Chlorobium phaeobacteroides (strain BS1) protein is Gamma-glutamyl phosphate reductase.